Consider the following 187-residue polypeptide: UPF0398 protein SAB1311c (187 aa).

The protein belongs to the UPF0398 family.

The sequence is that of UPF0398 protein SAB1311c from Staphylococcus aureus (strain bovine RF122 / ET3-1).